Here is a 617-residue protein sequence, read N- to C-terminus: Vacuolar protein sorting-associated protein 33B (617 aa).

At Ala-2 the chain carries N-acetylalanine.

It belongs to the STXBP/unc-18/SEC1 family. Interacts with RAB11A and VIPAS39. Associates with adapter protein complex 3 (AP-3), clathrin:AP-3 and clathrin:HGS complexes. Post-translationally, phosphorylated on tyrosine residues.

It localises to the late endosome membrane. The protein resides in the lysosome membrane. It is found in the early endosome. The protein localises to the cytoplasmic vesicle. Its subcellular location is the clathrin-coated vesicle. It localises to the recycling endosome. May play a role in vesicle-mediated protein trafficking to lysosomal compartments and in membrane docking/fusion reactions of late endosomes/lysosomes. Required for proper trafficking and targeting of the collagen-modifying enzyme lysyl hydroxylase 3 (LH3) to intracellular collagen. Mediates phagolysosomal fusion in macrophages. Proposed to be involved in endosomal maturation implicating in part VIPAS39. In epithelial cells, the VPS33B:VIPAS39 complex may play a role in the apical RAB11A-dependentrecycling pathway and in the maintenance of the apical-basolateral polarity. Seems to be involved in the sorting of specific cargos from the trans-Golgi network to alpha-granule-destined multivesicular bodies (MVBs) promoting MVBs maturation in megakaryocytes. The chain is Vacuolar protein sorting-associated protein 33B (Vps33b) from Mus musculus (Mouse).